A 480-amino-acid chain; its full sequence is Glutamate--tRNA ligase (480 aa).

The 'HIGH' region signature appears at 12 to 22; it reads PSPTGAPHLGL. Residues 255-259 carry the 'KMSKS' region motif; sequence KLSKR. Lys-258 contributes to the ATP binding site.

Belongs to the class-I aminoacyl-tRNA synthetase family. Glutamate--tRNA ligase type 1 subfamily. In terms of assembly, monomer.

Its subcellular location is the cytoplasm. The enzyme catalyses tRNA(Glu) + L-glutamate + ATP = L-glutamyl-tRNA(Glu) + AMP + diphosphate. In terms of biological role, catalyzes the attachment of glutamate to tRNA(Glu) in a two-step reaction: glutamate is first activated by ATP to form Glu-AMP and then transferred to the acceptor end of tRNA(Glu). The protein is Glutamate--tRNA ligase of Tropheryma whipplei (strain TW08/27) (Whipple's bacillus).